The sequence spans 228 residues: 7-cyano-7-deazaguanine synthase (228 aa).

7–17 contributes to the ATP binding site; it reads LSGGMDSLVTT. Zn(2+)-binding residues include cysteine 187, cysteine 195, cysteine 198, and cysteine 201.

Belongs to the QueC family. Zn(2+) is required as a cofactor.

The enzyme catalyses 7-carboxy-7-deazaguanine + NH4(+) + ATP = 7-cyano-7-deazaguanine + ADP + phosphate + H2O + H(+). The protein operates within purine metabolism; 7-cyano-7-deazaguanine biosynthesis. In terms of biological role, catalyzes the ATP-dependent conversion of 7-carboxy-7-deazaguanine (CDG) to 7-cyano-7-deazaguanine (preQ(0)). The sequence is that of 7-cyano-7-deazaguanine synthase from Chlorobium chlorochromatii (strain CaD3).